The sequence spans 129 residues: MAGRGKGKTAGKKAVSRSSKAGLQFPVGRIARYLKKGKYAERIGAGAPVYLAAVLEYLTAEVLELAGNAARDNKKNRIVPRHIQLAIRNDEELGKLLGDVTIASGGVLPNIHAVLLPKKSKGGKGEEAA.

Belongs to the histone H2A family. The nucleosome is a histone octamer containing two molecules each of H2A, H2B, H3 and H4 assembled in one H3-H4 heterotetramer and two H2A-H2B heterodimers. The octamer wraps approximately 147 bp of DNA.

Its subcellular location is the nucleus. The protein resides in the chromosome. Functionally, core component of nucleosome. Nucleosomes wrap and compact DNA into chromatin, limiting DNA accessibility to the cellular machineries which require DNA as a template. Histones thereby play a central role in transcription regulation, DNA repair, DNA replication and chromosomal stability. DNA accessibility is regulated via a complex set of post-translational modifications of histones, also called histone code, and nucleosome remodeling. The chain is Histone H2A-IV from Volvox carteri (Green alga).